Consider the following 462-residue polypeptide: ATP synthase subunit beta (462 aa).

ATP is bound at residue Gly-152 to Thr-159.

This sequence belongs to the ATPase alpha/beta chains family. F-type ATPases have 2 components, CF(1) - the catalytic core - and CF(0) - the membrane proton channel. CF(1) has five subunits: alpha(3), beta(3), gamma(1), delta(1), epsilon(1). CF(0) has three main subunits: a(1), b(2) and c(9-12). The alpha and beta chains form an alternating ring which encloses part of the gamma chain. CF(1) is attached to CF(0) by a central stalk formed by the gamma and epsilon chains, while a peripheral stalk is formed by the delta and b chains.

It localises to the cell inner membrane. The enzyme catalyses ATP + H2O + 4 H(+)(in) = ADP + phosphate + 5 H(+)(out). In terms of biological role, produces ATP from ADP in the presence of a proton gradient across the membrane. The catalytic sites are hosted primarily by the beta subunits. The sequence is that of ATP synthase subunit beta from Aeromonas hydrophila subsp. hydrophila (strain ATCC 7966 / DSM 30187 / BCRC 13018 / CCUG 14551 / JCM 1027 / KCTC 2358 / NCIMB 9240 / NCTC 8049).